We begin with the raw amino-acid sequence, 252 residues long: Large ribosomal subunit protein uL3 (252 aa).

Gln-169 is modified (N5-methylglutamine).

This sequence belongs to the universal ribosomal protein uL3 family. Part of the 50S ribosomal subunit. Forms a cluster with proteins L14 and L19. Methylated by PrmB.

Functionally, one of the primary rRNA binding proteins, it binds directly near the 3'-end of the 23S rRNA, where it nucleates assembly of the 50S subunit. The sequence is that of Large ribosomal subunit protein uL3 from Hyphomonas neptunium (strain ATCC 15444).